Here is a 166-residue protein sequence, read N- to C-terminus: NAD(P)H-quinone oxidoreductase subunit I, chloroplastic (166 aa).

4Fe-4S ferredoxin-type domains follow at residues G55–K84 and L95–E124. Positions 64, 67, 70, 74, 104, 107, 110, and 114 each coordinate [4Fe-4S] cluster.

This sequence belongs to the complex I 23 kDa subunit family. In terms of assembly, NDH is composed of at least 16 different subunits, 5 of which are encoded in the nucleus. [4Fe-4S] cluster serves as cofactor.

It localises to the plastid. It is found in the chloroplast thylakoid membrane. The catalysed reaction is a plastoquinone + NADH + (n+1) H(+)(in) = a plastoquinol + NAD(+) + n H(+)(out). It carries out the reaction a plastoquinone + NADPH + (n+1) H(+)(in) = a plastoquinol + NADP(+) + n H(+)(out). Functionally, NDH shuttles electrons from NAD(P)H:plastoquinone, via FMN and iron-sulfur (Fe-S) centers, to quinones in the photosynthetic chain and possibly in a chloroplast respiratory chain. The immediate electron acceptor for the enzyme in this species is believed to be plastoquinone. Couples the redox reaction to proton translocation, and thus conserves the redox energy in a proton gradient. The chain is NAD(P)H-quinone oxidoreductase subunit I, chloroplastic from Pericome caudata (Mountain tail-leaf).